The chain runs to 225 residues: Cardiotrophin-like cytokine factor 1 (225 aa).

A signal peptide spans 1 to 27; sequence MDLRAGDSWGMLACLCTVLWHLPAVPA. Residue asparagine 29 is glycosylated (N-linked (GlcNAc...) asparagine).

Belongs to the IL-6 superfamily. Forms a heteromeric complex with cardiotrophin-like cytokine CRLF1/CLF-1; the CRLF1-CLCF1 complex is a ligand for the ciliary neurotrophic factor receptor/CNTFR. The CRLF1-CLCF1 heterodimer binds SORL1 (via N-terminal ectodomain); within this complex, the interaction is mediated predominantly by the CRLF1 moiety. The tripartite signaling complex formed by CRLF1, CLCF1 and CNTFR also binds SORL1. Expressed predominantly in lymph nodes, spleen, peripheral blood lymphocytes, bone marrow, and fetal liver.

The protein localises to the secreted. Functionally, in complex with CRLF1, forms a heterodimeric neurotropic cytokine that plays a crucial role during neuronal development. Also stimulates B-cells. Binds to and activates the ILST/gp130 receptor. This is Cardiotrophin-like cytokine factor 1 (CLCF1) from Homo sapiens (Human).